The sequence spans 243 residues: MGQKINPIGFRLGINRTWDSRWYADTAEYGKLLHEDLKIRAYLIKELKQAGIAKVVIERPHKKCRVTIHSARPGLIIGKKGADIEKLRKKLSEMTNSETHLNIVEVRKPEIDATLVAQSIAQQLERRVAFRRAMKRAVQSAMRLGAEGIKITCGGRLGGAEIARTEWYREGRVPLHTLRADIDYGTAEAETAFGICGIKVWIFKGEILEHDPMASERRGLEGDAQGPASRERGDRPDRRRENA.

The KH type-2 domain maps to 39 to 107 (IRAYLIKELK…ETHLNIVEVR (69 aa)). The interval 214–243 (ASERRGLEGDAQGPASRERGDRPDRRRENA) is disordered. The span at 229 to 243 (SRERGDRPDRRRENA) shows a compositional bias: basic and acidic residues.

It belongs to the universal ribosomal protein uS3 family. As to quaternary structure, part of the 30S ribosomal subunit. Forms a tight complex with proteins S10 and S14.

Its function is as follows. Binds the lower part of the 30S subunit head. Binds mRNA in the 70S ribosome, positioning it for translation. This is Small ribosomal subunit protein uS3 from Agrobacterium fabrum (strain C58 / ATCC 33970) (Agrobacterium tumefaciens (strain C58)).